Reading from the N-terminus, the 173-residue chain is Bifunctional protein PyrR (173 aa).

The PRPP-binding signature appears at 93-105 (VILVDDVLYTGRT).

Belongs to the purine/pyrimidine phosphoribosyltransferase family. PyrR subfamily. Homodimer and homohexamer; in equilibrium.

The enzyme catalyses UMP + diphosphate = 5-phospho-alpha-D-ribose 1-diphosphate + uracil. Functionally, regulates transcriptional attenuation of the pyrimidine nucleotide (pyr) operon by binding in a uridine-dependent manner to specific sites on pyr mRNA. This disrupts an antiterminator hairpin in the RNA and favors formation of a downstream transcription terminator, leading to a reduced expression of downstream genes. Also displays a weak uracil phosphoribosyltransferase activity which is not physiologically significant. The polypeptide is Bifunctional protein PyrR (Streptococcus thermophilus (strain CNRZ 1066)).